The following is a 176-amino-acid chain: Xanthine-guanine phosphoribosyltransferase (176 aa).

Residues 51 to 52 (RG) and 110 to 118 (DDLVDTGKT) each bind 5-phospho-alpha-D-ribose 1-diphosphate. Asp-111 is a binding site for Mg(2+). Guanine-binding residues include Asp-114 and Ile-157. Xanthine is bound by residues Asp-114 and Ile-157. Residues 114-118 (DTGKT) and 156-157 (WI) each bind GMP.

This sequence belongs to the purine/pyrimidine phosphoribosyltransferase family. XGPT subfamily. In terms of assembly, homotetramer. It depends on Mg(2+) as a cofactor.

Its subcellular location is the cell inner membrane. The enzyme catalyses GMP + diphosphate = guanine + 5-phospho-alpha-D-ribose 1-diphosphate. The catalysed reaction is XMP + diphosphate = xanthine + 5-phospho-alpha-D-ribose 1-diphosphate. It catalyses the reaction IMP + diphosphate = hypoxanthine + 5-phospho-alpha-D-ribose 1-diphosphate. Its pathway is purine metabolism; GMP biosynthesis via salvage pathway; GMP from guanine: step 1/1. The protein operates within purine metabolism; XMP biosynthesis via salvage pathway; XMP from xanthine: step 1/1. In terms of biological role, purine salvage pathway enzyme that catalyzes the transfer of the ribosyl-5-phosphate group from 5-phospho-alpha-D-ribose 1-diphosphate (PRPP) to the N9 position of the 6-oxopurines guanine and xanthine to form the corresponding ribonucleotides GMP (guanosine 5'-monophosphate) and XMP (xanthosine 5'-monophosphate), with the release of PPi. To a lesser extent, also acts on hypoxanthine. The protein is Xanthine-guanine phosphoribosyltransferase of Bradyrhizobium diazoefficiens (strain JCM 10833 / BCRC 13528 / IAM 13628 / NBRC 14792 / USDA 110).